The primary structure comprises 403 residues: Tryptophan synthase beta chain (403 aa).

K88 is modified (N6-(pyridoxal phosphate)lysine).

Belongs to the TrpB family. As to quaternary structure, tetramer of two alpha and two beta chains. Requires pyridoxal 5'-phosphate as cofactor.

It catalyses the reaction (1S,2R)-1-C-(indol-3-yl)glycerol 3-phosphate + L-serine = D-glyceraldehyde 3-phosphate + L-tryptophan + H2O. It participates in amino-acid biosynthesis; L-tryptophan biosynthesis; L-tryptophan from chorismate: step 5/5. The beta subunit is responsible for the synthesis of L-tryptophan from indole and L-serine. This is Tryptophan synthase beta chain from Shewanella frigidimarina (strain NCIMB 400).